Consider the following 340-residue polypeptide: Pesticidal crystal protein Cry15Aa (340 aa).

Positions Arg318 to Glu340 are disordered.

Promotes colloidosmotic lysis by binding to the midgut epithelial cells of lepidopteran larvae. This is Pesticidal crystal protein Cry15Aa (cry15Aa) from Bacillus thuringiensis subsp. thompsoni.